Here is a 63-residue protein sequence, read N- to C-terminus: Large ribosomal subunit protein uL29 (63 aa).

It belongs to the universal ribosomal protein uL29 family.

The chain is Large ribosomal subunit protein uL29 from Vibrio campbellii (strain ATCC BAA-1116).